The chain runs to 200 residues: Superoxide dismutase [Mn] 1 (200 aa).

The Mn(2+) site is built by histidine 29, histidine 76, aspartate 158, and histidine 162.

This sequence belongs to the iron/manganese superoxide dismutase family. As to quaternary structure, homodimer or homotetramer. Mn(2+) serves as cofactor.

The enzyme catalyses 2 superoxide + 2 H(+) = H2O2 + O2. Its activity is regulated as follows. Inhibited by hydrogen peroxide. Is resistant to cyanide and azide inhibition. In terms of biological role, destroys superoxide anion radicals which are normally produced within the cells and which are toxic to biological systems. This chain is Superoxide dismutase [Mn] 1 (sod1), found in Halobacterium salinarum (strain ATCC 700922 / JCM 11081 / NRC-1) (Halobacterium halobium).